We begin with the raw amino-acid sequence, 327 residues long: DNA-directed RNA polymerase subunit alpha (327 aa).

Residues M1–E233 form an alpha N-terminal domain (alpha-NTD) region. Positions E266–K327 are alpha C-terminal domain (alpha-CTD).

It belongs to the RNA polymerase alpha chain family. In terms of assembly, in plastids the minimal PEP RNA polymerase catalytic core is composed of four subunits: alpha, beta, beta', and beta''. When a (nuclear-encoded) sigma factor is associated with the core the holoenzyme is formed, which can initiate transcription.

Its subcellular location is the plastid. The protein localises to the chloroplast. It carries out the reaction RNA(n) + a ribonucleoside 5'-triphosphate = RNA(n+1) + diphosphate. DNA-dependent RNA polymerase catalyzes the transcription of DNA into RNA using the four ribonucleoside triphosphates as substrates. The polypeptide is DNA-directed RNA polymerase subunit alpha (Barbarea verna (Land cress)).